The sequence spans 476 residues: 4-(hydroxymethyl)benzenesulfonate dehydrogenase TsaD1 (476 aa).

Residues 154-155 (WN), 178-181 (KAAE), and 230-231 (GS) contribute to the NAD(+) site. E252 functions as the Proton acceptor in the catalytic mechanism. NAD(+) is bound at residue L253. C286 acts as the Nucleophile in catalysis. Residue E380 participates in NAD(+) binding.

The protein belongs to the aldehyde dehydrogenase family. As to quaternary structure, homodimer.

The catalysed reaction is 4-(hydroxymethyl)benzenesulfonate + NAD(+) = 4-formylbenzenesulfonate + NADH + H(+). Functionally, involved in the toluene-4-sulfonate degradation pathway. Does not discriminate between the sulfonate and the carboxyl substituents and can also be involved in the p-toluenecarboxylate degradation pathway. The chain is 4-(hydroxymethyl)benzenesulfonate dehydrogenase TsaD1 (tsaD1) from Comamonas testosteroni (Pseudomonas testosteroni).